The following is a 326-amino-acid chain: HTH-type transcriptional regulator BlaA (326 aa).

An HTH lysR-type domain is found at 1 to 59 (MDVVNACRAFVKVSERGSFTVGAAAAQMSQSVASRRVAALEKHFGERLFDRASRRPSLT). Residues 19–38 (FTVGAAAAQMSQSVASRRVA) constitute a DNA-binding region (H-T-H motif). Residues 289-326 (TADHGPDPATGAGPGADAGTEPGARAEPGAPEEGAQAC) are disordered. Over residues 295–326 (DPATGAGPGADAGTEPGARAEPGAPEEGAQAC) the composition is skewed to low complexity.

This sequence belongs to the LysR transcriptional regulatory family.

Functionally, positive regulator of the expression of the gene (blaB) for beta-lactamase. It binds to the blaL-blaA intercistronic region. The chain is HTH-type transcriptional regulator BlaA (blaA) from Streptomyces cacaoi.